The sequence spans 273 residues: Anthranilate synthase beta subunit 2, chloroplastic (273 aa).

A chloroplast-targeting transit peptide spans 1–47; the sequence is MATAARLLPKIQSPASPAVAEARRRRPSSLRLGVTSGPARTLKQKLV. Residues 15–35 are disordered; that stretch reads ASPAVAEARRRRPSSLRLGVT. Residues 70–269 enclose the Glutamine amidotransferase type-1 domain; that stretch reads PIIVIDNYDS…IKIIEGYEAL (200 aa). 121–123 is a binding site for L-glutamine; it reads GPG. Catalysis depends on Cys-148, which acts as the Nucleophile. L-glutamine-binding positions include Gln-152 and 202-203; that span reads SL. Catalysis depends on residues His-243 and Glu-245.

As to quaternary structure, heterotetramer consisting of two non-identical subunits: a beta subunit and a large alpha subunit. As to expression, expressed in roots and leaves.

Its subcellular location is the plastid. It localises to the chloroplast. It catalyses the reaction chorismate + L-glutamine = anthranilate + pyruvate + L-glutamate + H(+). It participates in amino-acid biosynthesis; L-tryptophan biosynthesis; L-tryptophan from chorismate: step 1/5. Its function is as follows. Part of a heterotetrameric complex that catalyzes the two-step biosynthesis of anthranilate, an intermediate in the biosynthesis of L-tryptophan. In the first step, the glutamine-binding beta subunit of anthranilate synthase (AS) provides the glutamine amidotransferase activity which generates ammonia as a substrate that, along with chorismate, is used in the second step, catalyzed by the large alpha subunit of AS to produce anthranilate. This is Anthranilate synthase beta subunit 2, chloroplastic from Oryza sativa subsp. japonica (Rice).